The primary structure comprises 65 residues: DNA-binding protein 7e (65 aa).

N6-methyllysine is present on lysine 7. An N6-methyllysine; partial mark is found at lysine 63 and lysine 64.

This sequence belongs to the 7 kDa DNA-binding/endoribonuclease P2 family. Monomer. Post-translationally, lys-63 was found to be 25% monomethylated and Lys-64 was found to be 36% monomethylated.

It localises to the cytoplasm. Functionally, can constrain negative DNA supercoils. May be involved in maintaining the integrity of the genome at high temperature. The protein is DNA-binding protein 7e of Sulfolobus acidocaldarius (strain ATCC 33909 / DSM 639 / JCM 8929 / NBRC 15157 / NCIMB 11770).